The primary structure comprises 161 residues: Endoribonuclease YbeY (161 aa).

Positions 120, 124, and 130 each coordinate Zn(2+).

Belongs to the endoribonuclease YbeY family. Requires Zn(2+) as cofactor.

It localises to the cytoplasm. Functionally, single strand-specific metallo-endoribonuclease involved in late-stage 70S ribosome quality control and in maturation of the 3' terminus of the 16S rRNA. This is Endoribonuclease YbeY from Chlamydia trachomatis serovar L2 (strain ATCC VR-902B / DSM 19102 / 434/Bu).